Reading from the N-terminus, the 219-residue chain is Elongation factor Ts (219 aa).

The segment at 82 to 85 is involved in Mg(2+) ion dislocation from EF-Tu; that stretch reads TDFV.

This sequence belongs to the EF-Ts family.

It is found in the cytoplasm. In terms of biological role, associates with the EF-Tu.GDP complex and induces the exchange of GDP to GTP. It remains bound to the aminoacyl-tRNA.EF-Tu.GTP complex up to the GTP hydrolysis stage on the ribosome. In Anaeromyxobacter dehalogenans (strain 2CP-1 / ATCC BAA-258), this protein is Elongation factor Ts.